A 243-amino-acid chain; its full sequence is UPF0758 protein AM1_4368 (243 aa).

The 123-residue stretch at Val113–Leu235 folds into the MPN domain. His184, His186, and Asp197 together coordinate Zn(2+). A JAMM motif motif is present at residues His184–Asp197.

It belongs to the UPF0758 family.

In Acaryochloris marina (strain MBIC 11017), this protein is UPF0758 protein AM1_4368.